Reading from the N-terminus, the 309-residue chain is HPr kinase/phosphorylase (309 aa).

Catalysis depends on residues His-138 and Lys-159. 153–160 lines the ATP pocket; the sequence is GDSGIGKS. Residue Ser-160 coordinates Mg(2+). Asp-177 acts as the Proton acceptor; for phosphorylation activity. Proton donor; for dephosphorylation activity in catalysis. The important for the catalytic mechanism of both phosphorylation and dephosphorylation stretch occupies residues 201 to 210; the sequence is LEIRGVGIID. Glu-202 contacts Mg(2+). Arg-243 is a catalytic residue. The important for the catalytic mechanism of dephosphorylation stretch occupies residues 264–269; that stretch reads PVKTGR.

It belongs to the HPrK/P family. Homohexamer. It depends on Mg(2+) as a cofactor.

The enzyme catalyses [HPr protein]-L-serine + ATP = [HPr protein]-O-phospho-L-serine + ADP + H(+). The catalysed reaction is [HPr protein]-O-phospho-L-serine + phosphate + H(+) = [HPr protein]-L-serine + diphosphate. With respect to regulation, kinase activity is slightly activated by fructose 1,6-bisphosphate (FBP) at low ATP concentrations, and is inhibited by inorganic phosphate (Pi). Moreover, FBP, phosphoenolpyruvate and 2-phosphoglycerate, but not fructose 1-P, fructose 6-P, and ribulose 1,5-bisphosphate protect kinase activity against inhibition by Pi. Dephosphorylation of P-Ser-HPr by S.salivarius HPrK/P is strictly dependent on the presence of Pi, and is inhibited by FBP. FBP seems to modulate HPrK/P activities by enhancing affinity of the active site for ATP and, conversely, lowering the affinity for Pi. In terms of biological role, catalyzes the ATP- as well as probably the pyrophosphate-dependent phosphorylation of 'Ser-46' in HPr, a phosphocarrier protein of the phosphoenolpyruvate-dependent sugar phosphotransferase system (PTS). HprK/P also catalyzes the pyrophosphate-producing, inorganic phosphate-dependent dephosphorylation (phosphorolysis) of seryl-phosphorylated HPr (P-Ser-HPr). The two antagonistic activities of HprK/P are regulated by several intracellular metabolites, which change their concentration in response to the absence or presence of rapidly metabolisable carbon sources (glucose, fructose, etc.) in the growth medium. Therefore, by controlling the phosphorylation state of HPr, the bifunctional HPr kinase/phosphorylase is a sensor enzyme that plays a major role in the regulation of carbon metabolism and sugar transport: it probably mediates carbon catabolite repression (CCR), and regulates PTS-catalyzed carbohydrate uptake and inducer exclusion. The polypeptide is HPr kinase/phosphorylase (hprK) (Streptococcus salivarius).